The sequence spans 184 residues: Acireductone dioxygenase (184 aa).

Fe(2+)-binding residues include His-87, His-89, Glu-93, and His-137. Residues His-87, His-89, Glu-93, and His-137 each coordinate Ni(2+).

Belongs to the acireductone dioxygenase (ARD) family. The cofactor is Fe(2+). Ni(2+) serves as cofactor.

The protein localises to the cytoplasm. Its subcellular location is the nucleus. It carries out the reaction 1,2-dihydroxy-5-(methylsulfanyl)pent-1-en-3-one + O2 = 4-methylsulfanyl-2-oxobutanoate + formate + 2 H(+). The enzyme catalyses 1,2-dihydroxy-5-(methylsulfanyl)pent-1-en-3-one + O2 = 3-(methylsulfanyl)propanoate + CO + formate + 2 H(+). It participates in amino-acid biosynthesis; L-methionine biosynthesis via salvage pathway; L-methionine from S-methyl-5-thio-alpha-D-ribose 1-phosphate: step 5/6. Functionally, catalyzes 2 different reactions between oxygen and the acireductone 1,2-dihydroxy-3-keto-5-methylthiopentene (DHK-MTPene) depending upon the metal bound in the active site. Fe-containing acireductone dioxygenase (Fe-ARD) produces formate and 2-keto-4-methylthiobutyrate (KMTB), the alpha-ketoacid precursor of methionine in the methionine recycle pathway. Ni-containing acireductone dioxygenase (Ni-ARD) produces methylthiopropionate, carbon monoxide and formate, and does not lie on the methionine recycle pathway. The protein is Acireductone dioxygenase of Ciona intestinalis (Transparent sea squirt).